Consider the following 449-residue polypeptide: MSPQTETKASVGFKAGVKDYKLTYYTPDYETKDTDILAAFRVTPQPGVPPEEAGAAVAAESSTGTWTTVWTDGLTSLDRYKGRCYGLEPVAGEENQYIAYVAYPLDLFEEGSVTNMFTSIVGNVFGFKALRALRLEDLRIPPAYSKTFQGPPHGIQVERDKLNKYGRPLLGCTIKPKLGLSAKNYGRAVYECLRGGLDFTKDDENVNSQPFMRWRDRFLFCAEALYKAVAETGEIKGHYLNATAGTCEEMIKRAVFARELGVPIVMHDYLTGGFTANTSLAHYCRDNGLLLHIHXXXXXXXXXXKNHGMHFRVLAKALRMSGGDHVHAGTVVGKLEGERDITLGFVDLLRDDFIEKDRSRGIYFTQDWVSLPGVLPVASGGIHVWHMPALTEIFGDDSVLQFGGGTLGHPWGNAPGAVANRVAVEACVQARNEGRDLAREGNXIIREAS.

Positions 1–2 (MS) are excised as a propeptide. P3 bears the N-acetylproline mark. At K14 the chain carries N6,N6,N6-trimethyllysine. Residues N123 and T173 each contribute to the substrate site. K175 acts as the Proton acceptor in catalysis. K177 serves as a coordination point for substrate. Positions 201, 203, and 204 each coordinate Mg(2+). At K201 the chain carries N6-carboxylysine. The active-site Proton acceptor is H294. Substrate is bound by residues X295, H327, and S379.

It belongs to the RuBisCO large chain family. Type I subfamily. Heterohexadecamer of 8 large chains and 8 small chains; disulfide-linked. The disulfide link is formed within the large subunit homodimers. The cofactor is Mg(2+). The disulfide bond which can form in the large chain dimeric partners within the hexadecamer appears to be associated with oxidative stress and protein turnover.

The protein localises to the plastid. It is found in the chloroplast. It carries out the reaction 2 (2R)-3-phosphoglycerate + 2 H(+) = D-ribulose 1,5-bisphosphate + CO2 + H2O. It catalyses the reaction D-ribulose 1,5-bisphosphate + O2 = 2-phosphoglycolate + (2R)-3-phosphoglycerate + 2 H(+). Functionally, ruBisCO catalyzes two reactions: the carboxylation of D-ribulose 1,5-bisphosphate, the primary event in carbon dioxide fixation, as well as the oxidative fragmentation of the pentose substrate in the photorespiration process. Both reactions occur simultaneously and in competition at the same active site. The sequence is that of Ribulose bisphosphate carboxylase large chain from Salacia pallescens.